Consider the following 919-residue polypeptide: Rho guanine nucleotide exchange factor 1 (919 aa).

The RGSL domain occupies 39–230; the sequence is DQNSQFQSLE…SLYMRHLGVR (192 aa). The disordered stretch occupies residues 247-402; it reads VMGNRRSDEP…PPGWRELVPS (156 aa). The segment covering 281-310 has biased composition (basic and acidic residues); the sequence is DCRHLKVEVDEKPGPADRKGSLGISSRDRT. Residues 363–379 show a composition bias toward acidic residues; that stretch reads STEDNGETESPEPGDDG. Position 372 is a phosphoserine (serine 372). Residues 414-603 form the DH domain; it reads KRQEVISELL…REILHHVNQA (190 aa). The PH domain maps to 645–758; that stretch reads KLVHEGPLTW…WCALITETAG (114 aa). Threonine 693 carries the post-translational modification Phosphothreonine. Tyrosine 736 carries the phosphotyrosine; by JAK2 modification. 2 disordered regions span residues 761-800 and 839-865; these read KVPA…PADA and TEED…PTHT. The segment covering 775-787 has biased composition (low complexity); the sequence is PSSTREPLLSSSE. Residues 864 to 893 are a coiled coil; it reads HTQEVEENLLSLEVVIKQLEELEEEFCRLR. The residue at position 904 (serine 904) is a Phosphoserine.

As to quaternary structure, interacts with RHOA, GNA12 and GNA13. Homooligomerizes through the coiled coil region. Interacts with CTNNAL1. May interact with CCPG1. Post-translationally, phosphorylated by PKCA. Angiotensin-2 induced Tyr-736 phosphorylation is mediated by JAK2.

The protein localises to the cytoplasm. Its subcellular location is the membrane. In terms of biological role, seems to play a role in the regulation of RhoA GTPase by guanine nucleotide-binding alpha-12 (GNA12) and alpha-13 (GNA13) subunits. Acts as a GTPase-activating protein (GAP) for GNA12 and GNA13, and as guanine nucleotide exchange factor (GEF) for RhoA GTPase. Activated G alpha 13/GNA13 stimulates the RhoGEF activity through interaction with the RGS-like domain. This GEF activity is inhibited by binding to activated GNA12. Mediates angiotensin-2-induced RhoA activation. In lymphoid follicles, may trigger activation of GNA13 as part of S1PR2-dependent signaling pathway that leads to inhibition of germinal center (GC) B cell growth and migration outside the GC niche. The polypeptide is Rho guanine nucleotide exchange factor 1 (Arhgef1) (Rattus norvegicus (Rat)).